The sequence spans 629 residues: tRNA uridine 5-carboxymethylaminomethyl modification enzyme MnmG (629 aa).

FAD is bound by residues 13–18, Val-125, and Ser-180; that span reads GGGHAG. 273 to 287 provides a ligand contact to NAD(+); sequence GPRYCPSIEDKVMRF. Residue Gln-370 coordinates FAD.

The protein belongs to the MnmG family. Homodimer. Heterotetramer of two MnmE and two MnmG subunits. Requires FAD as cofactor.

Its subcellular location is the cytoplasm. Functionally, NAD-binding protein involved in the addition of a carboxymethylaminomethyl (cmnm) group at the wobble position (U34) of certain tRNAs, forming tRNA-cmnm(5)s(2)U34. This chain is tRNA uridine 5-carboxymethylaminomethyl modification enzyme MnmG, found in Escherichia coli O139:H28 (strain E24377A / ETEC).